The sequence spans 687 residues: Calcium-binding protein SP84 (687 aa).

An N-terminal signal peptide occupies residues 1 to 19 (MMRAIYLLVVVCWAAAANA). 5 consecutive EF-hand domains span residues 152 to 187 (LESDDITKFYKHLDNDKDNELKTEEVLKIQHTHKNK), 257 to 292 (LTEIDISLLYRSVDTNNDNKIIIDELKAFTGITDDV), 406 to 441 (KTEATVTRYMVEADIDKDSFICLEEFDEYMDIPHMV), 476 to 511 (IENAAFDTWFNHYDTNHNNKIEKEADGLLAKFNNDA), and 579 to 614 (MTERDIEDLFDELDHNDDHELTQQDFPDCWNDVKDL). D592, N594, D596, E598, and D603 together coordinate Ca(2+).

As to expression, expressed in salivary glands where expression is strongest in type III cells in the posterior lobe of the principal glands (at protein level). Not expressed in midgut, Malpighian tubules or epidermis.

Its subcellular location is the secreted. In terms of biological role, binds calcium. During feeding of the phloem sap, protein is injected into sieve tubes of rice plants. This process may suppress the sieve-element clogging and facilitate continuous ingestion from sieve tubes. This is Calcium-binding protein SP84 from Nephotettix cincticeps (Green rice leafhopper).